Here is a 91-residue protein sequence, read N- to C-terminus: Small ribosomal subunit protein uS19 (91 aa).

It belongs to the universal ribosomal protein uS19 family.

Its function is as follows. Protein S19 forms a complex with S13 that binds strongly to the 16S ribosomal RNA. The polypeptide is Small ribosomal subunit protein uS19 (Janthinobacterium sp. (strain Marseille) (Minibacterium massiliensis)).